We begin with the raw amino-acid sequence, 152 residues long: Putative NrdI-like protein (152 aa).

The protein belongs to the NrdI family.

The sequence is that of Putative NrdI-like protein from Streptococcus pyogenes serotype M18 (strain MGAS8232).